We begin with the raw amino-acid sequence, 60 residues long: Large ribosomal subunit protein bL32 (60 aa).

Residues 1 to 23 (MAVPRNRHSNARKNIRRSHHAKK) are disordered.

It belongs to the bacterial ribosomal protein bL32 family.

This chain is Large ribosomal subunit protein bL32, found in Chlamydia caviae (strain ATCC VR-813 / DSM 19441 / 03DC25 / GPIC) (Chlamydophila caviae).